The following is a 264-amino-acid chain: Thymidylate synthase (264 aa).

Residue Arg21 participates in dUMP binding. His51 contacts (6R)-5,10-methylene-5,6,7,8-tetrahydrofolate. 126–127 (RR) is a dUMP binding site. Cys146 functions as the Nucleophile in the catalytic mechanism. Residues 166-169 (RSCD), Asn177, and 207-209 (HLY) contribute to the dUMP site. (6R)-5,10-methylene-5,6,7,8-tetrahydrofolate is bound at residue Asp169. Position 263 (Ala263) interacts with (6R)-5,10-methylene-5,6,7,8-tetrahydrofolate.

Belongs to the thymidylate synthase family. Bacterial-type ThyA subfamily. In terms of assembly, homodimer.

It localises to the cytoplasm. The enzyme catalyses dUMP + (6R)-5,10-methylene-5,6,7,8-tetrahydrofolate = 7,8-dihydrofolate + dTMP. It participates in pyrimidine metabolism; dTTP biosynthesis. Functionally, catalyzes the reductive methylation of 2'-deoxyuridine-5'-monophosphate (dUMP) to 2'-deoxythymidine-5'-monophosphate (dTMP) while utilizing 5,10-methylenetetrahydrofolate (mTHF) as the methyl donor and reductant in the reaction, yielding dihydrofolate (DHF) as a by-product. This enzymatic reaction provides an intracellular de novo source of dTMP, an essential precursor for DNA biosynthesis. This Buchnera aphidicola subsp. Baizongia pistaciae (strain Bp) protein is Thymidylate synthase.